The chain runs to 23 residues: Unknown protein NF005 from 2D-PAGE (23 aa).

Positions 1–23 are disordered; sequence AGKARKQLSKNEDTKLKEQYIXD. A compositionally biased stretch (basic and acidic residues) spans 9-23; that stretch reads SKNEDTKLKEQYIXD.

This chain is Unknown protein NF005 from 2D-PAGE, found in Naegleria fowleri (Brain eating amoeba).